We begin with the raw amino-acid sequence, 283 residues long: MTDEQERVQPSGVWATAVGVARVRALETERENALFRDPLAQAFATAGGLWPSSPPLPDDEAARRRRLTVSFSIVIRTKFLDDLLQQASASGVRQVVLLGAGMDSRAFRMDWPEGTRLFEVDTAAPLDFKASVLRQERADARCERITVAVDLREDWPGALAAVGHDPAVPTVWIAEGLLIYLPEDAVELLLARISAQSAAGSRMGLTLGSRGVIERFGADAAPGSAASMWVSEMPDDPVGWLAGHGWEADSHTLRERAAAYGRPISTPPQREERPGGLISAVRR.

S-adenosyl-L-methionine contacts are provided by residues aspartate 121 and 150–151 (DL). The interval 258–283 (AAYGRPISTPPQREERPGGLISAVRR) is disordered.

Belongs to the UPF0677 family.

Its function is as follows. Exhibits S-adenosyl-L-methionine-dependent methyltransferase activity. The polypeptide is Putative S-adenosyl-L-methionine-dependent methyltransferase SAV_474/SAV474 (Streptomyces avermitilis (strain ATCC 31267 / DSM 46492 / JCM 5070 / NBRC 14893 / NCIMB 12804 / NRRL 8165 / MA-4680)).